The following is a 368-amino-acid chain: 3-isopropylmalate dehydrogenase (368 aa).

Residue 79–91 (GPEWGTSSTVRPE) coordinates NAD(+). 4 residues coordinate substrate: arginine 98, arginine 108, arginine 137, and aspartate 226. Mg(2+) contacts are provided by aspartate 226, aspartate 251, and aspartate 255. 291-303 (GSAPDISGKGIVN) serves as a coordination point for NAD(+).

This sequence belongs to the isocitrate and isopropylmalate dehydrogenases family. In terms of assembly, homodimer. Mg(2+) serves as cofactor. Requires Mn(2+) as cofactor.

The protein localises to the cytoplasm. It carries out the reaction (2R,3S)-3-isopropylmalate + NAD(+) = 4-methyl-2-oxopentanoate + CO2 + NADH. It participates in amino-acid biosynthesis; L-leucine biosynthesis; L-leucine from 3-methyl-2-oxobutanoate: step 3/4. Catalyzes the oxidation of 3-carboxy-2-hydroxy-4-methylpentanoate (3-isopropylmalate) to 3-carboxy-4-methyl-2-oxopentanoate. The product decarboxylates to 4-methyl-2 oxopentanoate. The chain is 3-isopropylmalate dehydrogenase (LEU1) from Sordaria macrospora.